The chain runs to 38 residues: Potassium channel toxin alpha-KTx 2.13 (38 aa).

Intrachain disulfides connect C7/C29, C13/C34, and C17/C36.

It belongs to the short scorpion toxin superfamily. Potassium channel inhibitor family. Alpha-KTx 02 subfamily. Expressed by the venom gland.

The protein resides in the secreted. In terms of biological role, selective inhibitor of voltage-gated potassium channels, blocks the Kv1.2/KCNA2 (Kd=1.3 nM) and Kv1.3/KCNA3 (Kd=7.2 nM) channels. Association and dissociation rates of the toxin are slower for Kv1.2/KCNA2 than for Kv1.3/KCNA3. This is Potassium channel toxin alpha-KTx 2.13 from Centruroides suffusus (Durango bark scorpion).